A 671-amino-acid chain; its full sequence is DNA ligase (671 aa).

Residues 32 to 36 (DAEYD), 81 to 82 (SL), and Glu113 each bind NAD(+). The active-site N6-AMP-lysine intermediate is the Lys115. Residues Arg136, Glu173, Lys290, and Lys314 each coordinate NAD(+). Residues Cys408, Cys411, Cys426, and Cys432 each coordinate Zn(2+). The BRCT domain maps to 593–671 (EIDSPFAGKT…ETEMLRLLGS (79 aa)).

The protein belongs to the NAD-dependent DNA ligase family. LigA subfamily. Mg(2+) is required as a cofactor. The cofactor is Mn(2+).

The enzyme catalyses NAD(+) + (deoxyribonucleotide)n-3'-hydroxyl + 5'-phospho-(deoxyribonucleotide)m = (deoxyribonucleotide)n+m + AMP + beta-nicotinamide D-nucleotide.. Functionally, DNA ligase that catalyzes the formation of phosphodiester linkages between 5'-phosphoryl and 3'-hydroxyl groups in double-stranded DNA using NAD as a coenzyme and as the energy source for the reaction. It is essential for DNA replication and repair of damaged DNA. The sequence is that of DNA ligase from Escherichia coli O127:H6 (strain E2348/69 / EPEC).